Reading from the N-terminus, the 96-residue chain is uncharacterized protein (96 aa).

This is an uncharacterized protein from Escherichia coli O157:H7.